The chain runs to 524 residues: CDC50-related protein CDC50.1 (524 aa).

2 stretches are compositionally biased toward polar residues: residues 1-19 (MGENSTTGLRGQADVSQFS) and 26-39 (TLSSPPTGQRQQSL). Disordered regions lie at residues 1–40 (MGENSTTGLRGQADVSQFSDAAVEPTLSSPPTGQRQQSLP) and 52–86 (APSVGGGGGWPFQRQGSSRLTSRGTSLSSCSDAGS). The Cytoplasmic segment spans residues 1–181 (MGENSTTGLR…GMYPLWSAGV (181 aa)). The span at 67-80 (GSSRLTSRGTSLSS) shows a compositional bias: low complexity. The helical transmembrane segment at 182–202 (VLRLCLLGALFFVSVGAWLIF) threads the bilayer. The Extracellular segment spans residues 203 to 473 (EDEQHVECKL…VQKSRLGGRS (271 aa)). 2 N-linked (GlcNAc...) asparagine glycosylation sites follow: N297 and N339. Residues 474–494 (LFIGIAYLSFGCLLTMLVFYM) form a helical membrane-spanning segment. Residues 495–524 (LWKKWQYRREGEEIRDLRWQTKTRGSKKTK) lie on the Cytoplasmic side of the membrane.

The protein belongs to the CDC50/LEM3 family. In terms of assembly, interacts with GC; the interaction regulates guanylate cyclase GC trafficking and sensing environmental changes.

It is found in the membrane. In terms of biological role, in tachyzoites, required for the cellular trafficking of guanylate cyclase GC and UGO to the cell membrane. May play a role in the folding of the GC P-type ATPase-like domain to sense vacuolar changes in phosphatidic acid and pH levels which trigger parasite egress. The chain is CDC50-related protein CDC50.1 from Toxoplasma gondii (strain ATCC 50853 / GT1).